A 329-amino-acid chain; its full sequence is Phosphatidylcholine:ceramide cholinephosphotransferase 3 (329 aa).

The Cytoplasmic portion of the chain corresponds to 1-26; that stretch reads MAVPPVEMYSGSFWNRMRKPLPLRTQ. The helical transmembrane segment at 27 to 47 threads the bilayer; it reads VIRFTVVFVIVSFILAVALQI. Over 48–74 the chain is Extracellular; that stretch reads THERMPDPKVTKPLPDLGFELLTKVPG. A helical transmembrane segment spans residues 75 to 95; it reads MYVLADCCIGFLNILSVFTAF. At 96 to 147 the chain is on the cytoplasmic side; the sequence is KLYLLHRHCVGSGEPELPCNIPGVSRFFLSVWLCKENCRIELRNIHTIAWIR. A helical transmembrane segment spans residues 148-168; sequence FITSYALLLLFRSAVIVMTSL. The Extracellular portion of the chain corresponds to 169–211; sequence PAPDDLCQNPPKIENPVKNVILTVLTAGAGSIHCGDLMYSGHT. A helical membrane pass occupies residues 212-232; that stretch reads VILTLHLMFHWIYGAMVHWSF. Residue R233 is a topological domain, cytoplasmic. Residues 234 to 254 form a helical membrane-spanning segment; sequence PVVTVVAIFGYYCIVASRFHY. Over 255–257 the chain is Extracellular; the sequence is TDD. Residues 258-278 form a helical membrane-spanning segment; sequence VLVAIYLTIATFIAVGHNADG. Topologically, residues 279 to 329 are cytoplasmic; the sequence is APWQLQLFIRWWPCCGANSREVTEDSQPVMVAFKSEAAGQSSRKVVDERNH.

This sequence belongs to the sphingomyelin synthase family.

Its subcellular location is the membrane. The enzyme catalyses an N-acylsphing-4-enine + a 1,2-diacyl-sn-glycero-3-phosphocholine = a sphingomyelin + a 1,2-diacyl-sn-glycerol. It catalyses the reaction an N-acylsphinganine + a 1,2-diacyl-sn-glycero-3-phosphocholine = an N-acylsphinganine-1-phosphocholine + a 1,2-diacyl-sn-glycerol. It carries out the reaction an N-acylsphing-4-enine + a 1,2-diacyl-sn-glycero-3-phosphoethanolamine = an N-acylsphing-4-enine 1-phosphoethanolamine + a 1,2-diacyl-sn-glycerol. The catalysed reaction is an N-acylsphinganine + a 1,2-diacyl-sn-glycero-3-phosphoethanolamine = an N-acylsphinganine-1-phosphoethanolamine + a 1,2-diacyl-sn-glycerol. Its function is as follows. Bifunctional sphingomyelin (SM)/ethanolamine phosphorylceramide (EPC) synthase with minimal inositol phosphorylceramide (IPC) synthase activity. Specificity is likely to be defined by residues in the lumenal catalytic domain that interact with the polar head groups of the phospholipid donors. SM is synthesized by both stages of the parasite life cycle, bloodstream forms (BSF) and procyclic forms (PCF), by transferring the phosphocholine from a 1,2-diacyl-sn-glycero-3-phosphocholine to an N-acylsphing-4-enine (ceramide) or an N-acylsphinganine (dihydroceramide). Similarly, EPC is synthesized by transferring phosphoethanolamine from a 1,2-diacyl-sn-glycero-3-phosphoethanolamine to ceramide or dihydroceramide by BSF and PCF, while IPC is confined to PCF. The ceramide/dihydroceramide ratios are skewed towards dihydroceramide in PCF parasites and ceramide in BSF parasites, this is likely due to differential expression and/or regulation of dihydroceramide desaturase, the enzyme responsible for converting dihydroceramide to ceramide. This is Phosphatidylcholine:ceramide cholinephosphotransferase 3 from Trypanosoma brucei brucei.